The chain runs to 178 residues: Large ribosomal subunit protein uL6 (178 aa).

The protein belongs to the universal ribosomal protein uL6 family. In terms of assembly, part of the 50S ribosomal subunit.

In terms of biological role, this protein binds to the 23S rRNA, and is important in its secondary structure. It is located near the subunit interface in the base of the L7/L12 stalk, and near the tRNA binding site of the peptidyltransferase center. The protein is Large ribosomal subunit protein uL6 of Streptococcus pneumoniae (strain ATCC 700669 / Spain 23F-1).